The sequence spans 345 residues: MKITELNYTLPTDLIAQKPLSERDKSRLLVLHKNTGEIEHRIFYEIVEYLNEGDILIINNTKVIPARLIAEKPSGGKIEILLIKEKKCSSQNVVWEVMTKGSYEGEVFIDEFIAELRNNCDGRYIVFKNMTSPKVRNLINEKGFMPLPPYIKRKPIQSDRQDYQTVYAKMNGSIAAPTAGLHFTKELLETIISKGVKLREITLHVGVGTFKPIKVDKLQEHKMDPEYFEIDKTLIEEIYAIKKAGKRIFSVGTTTTRALEGYASGKYEDRGSDNYKIKGSTDIFIYPEFSFKIVDALITNFHLPKSTPLAMVYAFCEMQKVKKAYREAIEKGYRFFSYGDAMLII.

Belongs to the QueA family. As to quaternary structure, monomer.

It localises to the cytoplasm. The catalysed reaction is 7-aminomethyl-7-carbaguanosine(34) in tRNA + S-adenosyl-L-methionine = epoxyqueuosine(34) in tRNA + adenine + L-methionine + 2 H(+). The protein operates within tRNA modification; tRNA-queuosine biosynthesis. Its function is as follows. Transfers and isomerizes the ribose moiety from AdoMet to the 7-aminomethyl group of 7-deazaguanine (preQ1-tRNA) to give epoxyqueuosine (oQ-tRNA). This Thermodesulfovibrio yellowstonii (strain ATCC 51303 / DSM 11347 / YP87) protein is S-adenosylmethionine:tRNA ribosyltransferase-isomerase.